The primary structure comprises 209 residues: Uracil phosphoribosyltransferase (209 aa).

5-phospho-alpha-D-ribose 1-diphosphate-binding positions include Arg-79, Arg-104, and 131–139 (DPMLATGGS). Uracil is bound by residues Ile-194 and 199–201 (GDA). Asp-200 is a 5-phospho-alpha-D-ribose 1-diphosphate binding site.

The protein belongs to the UPRTase family. The cofactor is Mg(2+).

The catalysed reaction is UMP + diphosphate = 5-phospho-alpha-D-ribose 1-diphosphate + uracil. It functions in the pathway pyrimidine metabolism; UMP biosynthesis via salvage pathway; UMP from uracil: step 1/1. Its activity is regulated as follows. Allosterically activated by GTP. Its function is as follows. Catalyzes the conversion of uracil and 5-phospho-alpha-D-ribose 1-diphosphate (PRPP) to UMP and diphosphate. This chain is Uracil phosphoribosyltransferase, found in Streptococcus mutans serotype c (strain ATCC 700610 / UA159).